The chain runs to 252 residues: Thiamine thiazole synthase (252 aa).

NAD(+) contacts are provided by residues S35, 54-55 (EK), G62, V126, and 152-154 (HVD). The Fe cation site is built by D154 and H169. M217 serves as a coordination point for NAD(+). Residue R227 participates in glycine binding.

This sequence belongs to the THI4 family. In terms of assembly, homooctamer; tetramer of dimers. It depends on Fe(2+) as a cofactor.

The catalysed reaction is hydrogen sulfide + glycine + NAD(+) = ADP-5-ethyl-4-methylthiazole-2-carboxylate + nicotinamide + 3 H2O + H(+). Its pathway is cofactor biosynthesis; thiamine diphosphate biosynthesis. Involved in the biosynthesis of the thiazole moiety of thiamine. Catalyzes the conversion of NAD and glycine to adenosine diphosphate 5-(2-hydroxyethyl)-4-methylthiazole-2-carboxylate (ADT), an adenylated thiazole intermediate, using free sulfide as a source of sulfur. In Pyrococcus abyssi (strain GE5 / Orsay), this protein is Thiamine thiazole synthase.